Consider the following 115-residue polypeptide: Protein E6A (115 aa).

The signal sequence occupies residues 1 to 25 (MTDKFYFYGLFWGILLFVFLQHMQG).

In Equine herpesvirus 2 (strain 86/87) (EHV-2), this protein is Protein E6A (12).